A 219-amino-acid chain; its full sequence is N-(5'-phosphoribosyl)anthranilate isomerase (219 aa).

It belongs to the TrpF family.

The catalysed reaction is N-(5-phospho-beta-D-ribosyl)anthranilate = 1-(2-carboxyphenylamino)-1-deoxy-D-ribulose 5-phosphate. The protein operates within amino-acid biosynthesis; L-tryptophan biosynthesis; L-tryptophan from chorismate: step 3/5. In Bradyrhizobium sp. (strain ORS 278), this protein is N-(5'-phosphoribosyl)anthranilate isomerase.